The following is a 342-amino-acid chain: MVQNIAILGASGYTGAELVRLIATHPSMRIVALSGDRKAGMAMAEVFPFLRHLDLPRLQKIEEIDFSSVDLAFCALPHATSQAVIAGLPRDLKIVDLSADFRLRDPAAYETWYGKPHAAPELQKEAVYGLTEFYRDEIRAARLVAGTGCNAATGQYAIRPLIEAGVIDLDDILIDLKAGVSGAGRSLKENLLHAELSEGTHAYSAGGRHRHLGEFDQEFSKIAGRPVQVRFTPHLTPMNRGILANVYVKGDPQAVHRALTERYLTETFLEVLPFGALPSTRDIRGSNYVHIGVIGDRVPGCAMVVAVLDNLCKGSSGQAIQNANLMLGLDEAEGLRLAPVFP.

Residue Cys149 is part of the active site.

The protein belongs to the NAGSA dehydrogenase family. Type 1 subfamily.

It is found in the cytoplasm. The enzyme catalyses N-acetyl-L-glutamate 5-semialdehyde + phosphate + NADP(+) = N-acetyl-L-glutamyl 5-phosphate + NADPH + H(+). Its pathway is amino-acid biosynthesis; L-arginine biosynthesis; N(2)-acetyl-L-ornithine from L-glutamate: step 3/4. Catalyzes the NADPH-dependent reduction of N-acetyl-5-glutamyl phosphate to yield N-acetyl-L-glutamate 5-semialdehyde. In Cereibacter sphaeroides (strain KD131 / KCTC 12085) (Rhodobacter sphaeroides), this protein is N-acetyl-gamma-glutamyl-phosphate reductase.